Consider the following 497-residue polypeptide: Serine hydroxymethyltransferase (497 aa).

(6S)-5,6,7,8-tetrahydrofolate-binding positions include L176 and 180–182; that span reads GHL. N6-(pyridoxal phosphate)lysine is present on K289.

It belongs to the SHMT family. In terms of assembly, homodimer. Pyridoxal 5'-phosphate is required as a cofactor.

The protein resides in the cytoplasm. The catalysed reaction is (6R)-5,10-methylene-5,6,7,8-tetrahydrofolate + glycine + H2O = (6S)-5,6,7,8-tetrahydrofolate + L-serine. Its pathway is one-carbon metabolism; tetrahydrofolate interconversion. It participates in amino-acid biosynthesis; glycine biosynthesis; glycine from L-serine: step 1/1. Catalyzes the reversible interconversion of serine and glycine with tetrahydrofolate (THF) serving as the one-carbon carrier. This reaction serves as the major source of one-carbon groups required for the biosynthesis of purines, thymidylate, methionine, and other important biomolecules. Also exhibits THF-independent aldolase activity toward beta-hydroxyamino acids, producing glycine and aldehydes, via a retro-aldol mechanism. The chain is Serine hydroxymethyltransferase from Chlamydia caviae (strain ATCC VR-813 / DSM 19441 / 03DC25 / GPIC) (Chlamydophila caviae).